The sequence spans 170 residues: Small ribosomal subunit protein uS5 (170 aa).

One can recognise an S5 DRBM domain in the interval 13–76 (LTEKLIGVNR…DQARRSMVKI (64 aa)).

Belongs to the universal ribosomal protein uS5 family. In terms of assembly, part of the 30S ribosomal subunit. Contacts proteins S4 and S8.

Functionally, with S4 and S12 plays an important role in translational accuracy. In terms of biological role, located at the back of the 30S subunit body where it stabilizes the conformation of the head with respect to the body. This Laribacter hongkongensis (strain HLHK9) protein is Small ribosomal subunit protein uS5.